The sequence spans 231 residues: Very-long-chain (3R)-3-hydroxyacyl-CoA dehydratase 4 (231 aa).

Residues 1-19 (MGPVALPTWLQPRYRKNAY) are Cytoplasmic-facing. A helical membrane pass occupies residues 20 to 40 (LFIYYLIQFCGHSWIFTNMTV). The Lumenal segment spans residues 41–56 (RFFSFGKDSMVDTFYA). A helical transmembrane segment spans residues 57–77 (IGLVMQLCQSISLLELLHIYV). The Cytoplasmic segment spans residues 78–112 (GIESNHLLPRILQLTERIIVLFMVITSQEEVQEKY). The helical transmembrane segment at 113 to 133 (VVCVLFIFRNLLDMVRYTYSM) threads the bilayer. Residues 134-135 (LS) lie on the Lumenal side of the membrane. A helical membrane pass occupies residues 136-156 (VIGISYAVLTWFSQTLWMPIY). Y156 is a catalytic residue. P157 is a topological domain (cytoplasmic). Residues 158-178 (LCVLAEAFTIYQSLPYFESFG) traverse the membrane as a helical segment. The active site involves E163. Residues 179–189 (TYSTKLPFDLS) are Lumenal-facing. A helical transmembrane segment spans residues 190-210 (FYFPYVLKIYLMMLFVGMYFT). Over 211–231 (YNHLYSERRDILRVFPNKKKM) the chain is Cytoplasmic.

This sequence belongs to the very long-chain fatty acids dehydratase HACD family. May interact with enzymes of the ELO family (including ELOVL1); with those enzymes that mediate condensation, the first of the four steps of the reaction cycle responsible for fatty acids elongation, may be part of a larger fatty acids elongase complex.

The protein resides in the endoplasmic reticulum membrane. The catalysed reaction is a very-long-chain (3R)-3-hydroxyacyl-CoA = a very-long-chain (2E)-enoyl-CoA + H2O. It carries out the reaction (3R)-hydroxyhexadecanoyl-CoA = (2E)-hexadecenoyl-CoA + H2O. The protein operates within lipid metabolism; fatty acid biosynthesis. In terms of biological role, catalyzes the third of the four reactions of the long-chain fatty acids elongation cycle. This endoplasmic reticulum-bound enzymatic process, allows the addition of two carbons to the chain of long- and very long-chain fatty acids/VLCFAs per cycle. This enzyme catalyzes the dehydration of the 3-hydroxyacyl-CoA intermediate into trans-2,3-enoyl-CoA, within each cycle of fatty acid elongation. Thereby, it participates in the production of VLCFAs of different chain lengths that are involved in multiple biological processes as precursors of membrane lipids and lipid mediators. The sequence is that of Very-long-chain (3R)-3-hydroxyacyl-CoA dehydratase 4 from Bos taurus (Bovine).